The chain runs to 362 residues: HMG box-containing protein C19G7.04 (362 aa).

Residues 135–299 (KCFLARLEDE…RLCKSQIKQI (165 aa)) form the SprT-like domain. The HMG box DNA-binding region spans 306 to 348 (PNAFQIFLKENSKRLRKLHPHITHKELMKKLSDEYHRTKDAKQ).

The protein localises to the nucleus. Its subcellular location is the cytoplasm. It is found in the cytoskeleton. It localises to the spindle. This chain is HMG box-containing protein C19G7.04, found in Schizosaccharomyces pombe (strain 972 / ATCC 24843) (Fission yeast).